Consider the following 185-residue polypeptide: Ribosome-recycling factor (185 aa).

The protein belongs to the RRF family.

The protein resides in the cytoplasm. Responsible for the release of ribosomes from messenger RNA at the termination of protein biosynthesis. May increase the efficiency of translation by recycling ribosomes from one round of translation to another. The sequence is that of Ribosome-recycling factor from Dehalococcoides mccartyi (strain CBDB1).